A 59-amino-acid polypeptide reads, in one-letter code: Large ribosomal subunit protein bL32 (59 aa).

Residues 1 to 20 form a disordered region; that stretch reads MAVPRNRHSNARKNIRRSHH.

Belongs to the bacterial ribosomal protein bL32 family.

This Chlamydia trachomatis serovar A (strain ATCC VR-571B / DSM 19440 / HAR-13) protein is Large ribosomal subunit protein bL32.